Here is a 105-residue protein sequence, read N- to C-terminus: NADH-quinone oxidoreductase subunit K (105 aa).

3 helical membrane passes run 8–28, 33–53, and 65–85; these read VTNG…GIII, ILIL…NFLI, and VFVF…LAIV.

It belongs to the complex I subunit 4L family. In terms of assembly, NDH-1 is composed of 14 different subunits. Subunits NuoA, H, J, K, L, M, N constitute the membrane sector of the complex.

It is found in the cell inner membrane. The catalysed reaction is a quinone + NADH + 5 H(+)(in) = a quinol + NAD(+) + 4 H(+)(out). NDH-1 shuttles electrons from NADH, via FMN and iron-sulfur (Fe-S) centers, to quinones in the respiratory chain. The immediate electron acceptor for the enzyme in this species is believed to be ubiquinone. Couples the redox reaction to proton translocation (for every two electrons transferred, four hydrogen ions are translocated across the cytoplasmic membrane), and thus conserves the redox energy in a proton gradient. This Francisella philomiragia subsp. philomiragia (strain ATCC 25017 / CCUG 19701 / FSC 153 / O#319-036) protein is NADH-quinone oxidoreductase subunit K.